We begin with the raw amino-acid sequence, 139 residues long: MNNRTIMAFDFGTRSIGAAIGQEITGTARALTSFKATDGIPNWGQIEKLLKEWQPDLVIVGLPLNMDGTEQFVTVQARKFANRLHGRFGVQVQLQDERLTTVEARAHLFDRGGYKALNKGKVDATSAVIILESWFEQRY.

The protein belongs to the YqgF nuclease family.

It localises to the cytoplasm. Functionally, could be a nuclease involved in processing of the 5'-end of pre-16S rRNA. This Photorhabdus laumondii subsp. laumondii (strain DSM 15139 / CIP 105565 / TT01) (Photorhabdus luminescens subsp. laumondii) protein is Putative pre-16S rRNA nuclease.